A 158-amino-acid chain; its full sequence is MFDILMYLFENYVHSEVELLVDEDELTKELTRAGFHQSEILKALTWLERLAELQESDKPYLCNHDQHSFRIYTKEEMEKLDVECRGFLLFLEQVKVLNVETREMVIDRVMELDEPALILEDLKWVILMVLFNAPGHESAYEQMEDLIFEQPEEGRLHS.

This sequence belongs to the Smg family.

The polypeptide is Protein Smg homolog (Shewanella sp. (strain ANA-3)).